The primary structure comprises 329 residues: Ribosome biogenesis regulatory protein homolog (329 aa).

Disordered stretches follow at residues 227-248 and 262-329; these read KANIKTGKKRKFESNEAPVSAE and KKAK…NKRK. A compositionally biased stretch (basic and acidic residues) spans 278–295; that stretch reads LREKKEKQEKKGAKEATR. The segment covering 320–329 has biased composition (basic residues); that stretch reads AKKKGANKRK.

Belongs to the RRS1 family.

It is found in the nucleus. The protein resides in the nucleolus. In terms of biological role, involved in ribosomal large subunit assembly. In Caenorhabditis briggsae, this protein is Ribosome biogenesis regulatory protein homolog.